Reading from the N-terminus, the 225-residue chain is Deoxyribose-phosphate aldolase (225 aa).

The Proton donor/acceptor role is filled by Asp-94. Lys-158 functions as the Schiff-base intermediate with acetaldehyde in the catalytic mechanism. Lys-187 functions as the Proton donor/acceptor in the catalytic mechanism.

The protein belongs to the DeoC/FbaB aldolase family. DeoC type 1 subfamily.

It localises to the cytoplasm. The catalysed reaction is 2-deoxy-D-ribose 5-phosphate = D-glyceraldehyde 3-phosphate + acetaldehyde. It participates in carbohydrate degradation; 2-deoxy-D-ribose 1-phosphate degradation; D-glyceraldehyde 3-phosphate and acetaldehyde from 2-deoxy-alpha-D-ribose 1-phosphate: step 2/2. In terms of biological role, catalyzes a reversible aldol reaction between acetaldehyde and D-glyceraldehyde 3-phosphate to generate 2-deoxy-D-ribose 5-phosphate. The chain is Deoxyribose-phosphate aldolase from Thermococcus gammatolerans (strain DSM 15229 / JCM 11827 / EJ3).